The sequence spans 235 residues: Protein GrpE (235 aa).

2 stretches are compositionally biased toward basic and acidic residues: residues 1–16 (MENK…HEKN) and 24–35 (NNVKKENLHEDQ). The segment at 1–51 (MENKNQKHNNEFHEKNQQSQKDNNNVKKENLHEDQSDLNDANFDDGGKKNK) is disordered.

It belongs to the GrpE family. Homodimer.

It localises to the cytoplasm. Functionally, participates actively in the response to hyperosmotic and heat shock by preventing the aggregation of stress-denatured proteins, in association with DnaK and GrpE. It is the nucleotide exchange factor for DnaK and may function as a thermosensor. Unfolded proteins bind initially to DnaJ; upon interaction with the DnaJ-bound protein, DnaK hydrolyzes its bound ATP, resulting in the formation of a stable complex. GrpE releases ADP from DnaK; ATP binding to DnaK triggers the release of the substrate protein, thus completing the reaction cycle. Several rounds of ATP-dependent interactions between DnaJ, DnaK and GrpE are required for fully efficient folding. This chain is Protein GrpE, found in Malacoplasma penetrans (strain HF-2) (Mycoplasma penetrans).